The following is a 155-amino-acid chain: Protein SprT-like (155 aa).

A SprT-like domain is found at 7-145; it reads QRHMEEVSLQ…GSCGGKLIQT (139 aa). Histidine 67 serves as a coordination point for Zn(2+). Glutamate 68 is a catalytic residue. Histidine 71 serves as a coordination point for Zn(2+).

It belongs to the SprT family. Zn(2+) serves as cofactor.

The protein resides in the cytoplasm. This is Protein SprT-like from Listeria monocytogenes serovar 1/2a (strain ATCC BAA-679 / EGD-e).